A 201-amino-acid polypeptide reads, in one-letter code: MKFNYPTGSKATTPKMSQAKVSMPPIYGKRGMSLEEELNESNAYYLSHGVAVIHKKPTPIQIVKVDYPKRSAAQIKEAYFSKASTTDYNGVYRGKYIDFDAKETTNSTSFPLSNFHEHQINHMKDCEKVGGICFTIIKFVKLNKIFLLKTKDLFQFWDSKENGGRKSIPLSVFEEQGYQLEYQMNPLIPYLKAVDKIIENL.

Mg(2+) is bound by residues T85, D87, D100, and Q119.

This sequence belongs to the RecU family. Requires Mg(2+) as cofactor.

The protein resides in the cytoplasm. It carries out the reaction Endonucleolytic cleavage at a junction such as a reciprocal single-stranded crossover between two homologous DNA duplexes (Holliday junction).. Functionally, endonuclease that resolves Holliday junction intermediates in genetic recombination. Cleaves mobile four-strand junctions by introducing symmetrical nicks in paired strands. Promotes annealing of linear ssDNA with homologous dsDNA. Required for DNA repair, homologous recombination and chromosome segregation. In Pediococcus pentosaceus (strain ATCC 25745 / CCUG 21536 / LMG 10740 / 183-1w), this protein is Holliday junction resolvase RecU.